We begin with the raw amino-acid sequence, 84 residues long: U4-theraphotoxin-Hhn1a (84 aa).

Residues 1 to 22 (MKVTLIAILTCAAVLVLHTTAA) form the signal peptide. Positions 23 to 47 (EELEESQLMEVGMPDTELAAVDGER) are excised as a propeptide. Cystine bridges form between C51–C65, C55–C76, and C70–C81.

Belongs to the neurotoxin 12 (Hwtx-2) family. 02 (Hwtx-2) subfamily. As to expression, expressed by the venom gland.

The protein resides in the secreted. In terms of biological role, postsynaptic neurotoxin. The sequence is that of U4-theraphotoxin-Hhn1a from Cyriopagopus hainanus (Chinese bird spider).